We begin with the raw amino-acid sequence, 532 residues long: Sodium-dependent lysophosphatidylcholine symporter 1-A (532 aa).

Over 1–40 (MARGEGAEQFSSGLLPTAKSVTQNEIKMVKLPKQQERKRA) the chain is Cytoplasmic. Residues 41-70 (LTVWSKVCFAIGGAPYQITGTALGFFLQIF) form a helical membrane-spanning segment. The Extracellular segment spans residues 71-81 (LLDVAQLNPLN). Residues 82 to 102 (ASVILFVGRAWDAVTDPTVGF) traverse the membrane as a helical segment. Residues 103 to 114 (LVSRTPWTRHGR) are Cytoplasmic-facing. The chain crosses the membrane as a helical span at residues 115–134 (MMPWILVSTIPAVLCYFLIW). The Extracellular portion of the chain corresponds to 135–144 (VVPPIEQGKM). Residues 145–169 (MWYLLFYCLFQTLQTCFHVPYSALT) form a helical membrane-spanning segment. Topologically, residues 170–176 (MFISTEQ) are cytoplasmic. Residues 177-208 (RERDSATAYRMTVEVFGTVVGTAIQGQIVGMA) form a helical membrane-spanning segment. The Extracellular segment spans residues 209–232 (NTPCKNNTSPNNSSNDLIQSNNSH). Residues Cys-212 and Cys-464 are joined by a disulfide bond. Asn-214, Asn-220, and Asn-229 each carry an N-linked (GlcNAc...) asparagine glycan. The helical transmembrane segment at 233–266 (IPLKSNIFDERCAYMIASAVISLIYVVCAAVLFF) threads the bilayer. Topologically, residues 267 to 297 (GVREQDVQGELKAQKRVSFQKGLRLVMGHGP) are cytoplasmic. The chain crosses the membrane as a helical span at residues 298–324 (YVKLVLAFLFTSLAFMLLEGNFAVFIK). The Extracellular segment spans residues 325-335 (YTLGFREDFQN). A helical membrane pass occupies residues 336–354 (ILLVIMVSATVSIPMWQWF). The Cytoplasmic portion of the chain corresponds to 355–358 (LCRF). The helical transmembrane segment at 359-380 (GKKTAVYIGITWAVPFMILVVS) threads the bilayer. The Extracellular segment spans residues 381 to 383 (VNS). A helical transmembrane segment spans residues 384-420 (SLIVSYIVSIAAGVSVGAAFLLPWSMLPDVVDDFKLQ). At 421–430 (NPTSQGHEAI) the chain is on the cytoplasmic side. A helical transmembrane segment spans residues 431-457 (FYSFYVFFTKFASGVSLGVSTLALSFA). The Extracellular portion of the chain corresponds to 458–469 (GYETGVCVQSDS). Residues 470-493 (VNLTLKLLVSAAPVSLIALGLLIF) form a helical membrane-spanning segment. At 494–532 (MTYPIDEERREYNNKQLQLLLRNEEEEDEMEVLKPDITA) the chain is on the cytoplasmic side.

This sequence belongs to the major facilitator superfamily. In terms of tissue distribution, expressed in the developing nervous system.

The protein localises to the cell membrane. It localises to the endoplasmic reticulum membrane. The catalysed reaction is a 1-acyl-sn-glycero-3-phosphocholine(in) + Na(+)(in) = a 1-acyl-sn-glycero-3-phosphocholine(out) + Na(+)(out). The enzyme catalyses 1-(4Z,7Z,10Z,13Z,16Z,19Z-docosahexaenoyl)-sn-glycero-3-phosphocholine(in) + Na(+)(in) = 1-(4Z,7Z,10Z,13Z,16Z,19Z-docosahexaenoyl)-sn-glycero-3-phosphocholine(out) + Na(+)(out). It catalyses the reaction 1-(9Z-octadecenoyl)-sn-glycero-3-phosphocholine(in) + Na(+)(in) = 1-(9Z-octadecenoyl)-sn-glycero-3-phosphocholine(out) + Na(+)(out). It carries out the reaction 1-hexadecanoyl-sn-glycero-3-phosphocholine(in) + Na(+)(in) = 1-hexadecanoyl-sn-glycero-3-phosphocholine(out) + Na(+)(out). The catalysed reaction is a 1-acyl-sn-glycero-3-phosphoethanolamine(in) + Na(+)(in) = a 1-acyl-sn-glycero-3-phosphoethanolamine(out) + Na(+)(out). Functionally, sodium-dependent lysophosphatidylcholine (LPC) symporter, which plays an essential role for blood-brain barrier formation and function. Specifically expressed in endothelium of the blood-brain barrier of micro-vessels and transports LPC into the brain. Transport of LPC is essential because it constitutes the major mechanism by which docosahexaenoic acid (DHA), an omega-3 fatty acid that is essential for normal brain growth and cognitive function, enters the brain. Transports LPC carrying long-chain fatty acids such LPC oleate and LPC palmitate with a minimum acyl chain length of 14 carbons. Does not transport docosahexaenoic acid in unesterified fatty acid. The chain is Sodium-dependent lysophosphatidylcholine symporter 1-A (mfsd2aa) from Danio rerio (Zebrafish).